Consider the following 68-residue polypeptide: Large ribosomal subunit protein bL35 (68 aa).

A compositionally biased stretch (basic residues) spans 1–25 (MGTKIKTHKGTKKRFRLSAKGKAMH). The segment at 1–43 (MGTKIKTHKGTKKRFRLSAKGKAMHRQSGTSHLAKGLSKKRRR) is disordered.

Belongs to the bacterial ribosomal protein bL35 family.

This Rhodopirellula baltica (strain DSM 10527 / NCIMB 13988 / SH1) protein is Large ribosomal subunit protein bL35.